A 94-amino-acid polypeptide reads, in one-letter code: Endoribonuclease VapD 2 (94 aa).

Belongs to the VapD ribonuclease family. Homodimer.

Functionally, cleaves ssRNA, mostly between U:A. This Riemerella anatipestifer (Moraxella anatipestifer) protein is Endoribonuclease VapD 2.